Here is a 156-residue protein sequence, read N- to C-terminus: MKLNEIKDNEGATKNRKRLGRGIGSGSGKTAGRGVKGQKARSGVSINGFEGGQMPIYRRLPKRGFNNIFASEFVVVSLGRIQAAVDAKKLDASKTVDAAALKAAGVIRRVKDGVRVLADGELKAKVSLEVAGASKPAIEKIEKAGGSIKLLSAAAE.

The span at 1–13 (MKLNEIKDNEGAT) shows a compositional bias: basic and acidic residues. The interval 1 to 41 (MKLNEIKDNEGATKNRKRLGRGIGSGSGKTAGRGVKGQKAR) is disordered. Positions 21-35 (RGIGSGSGKTAGRGV) are enriched in gly residues.

The protein belongs to the universal ribosomal protein uL15 family. In terms of assembly, part of the 50S ribosomal subunit.

Its function is as follows. Binds to the 23S rRNA. The sequence is that of Large ribosomal subunit protein uL15 from Sinorhizobium medicae (strain WSM419) (Ensifer medicae).